Consider the following 533-residue polypeptide: GMP synthase [glutamine-hydrolyzing] (533 aa).

The Glutamine amidotransferase type-1 domain occupies 22–215 (RILILDFGSQ…THNVAGCSGT (194 aa)). The active-site Nucleophile is the cysteine 99. Residues histidine 189 and glutamate 191 contribute to the active site. The GMPS ATP-PPase domain maps to 216-408 (WTMAGFRELE…LGIPESIVGR (193 aa)). ATP is bound at residue 243-249 (SGGVDSS).

Homodimer.

It carries out the reaction XMP + L-glutamine + ATP + H2O = GMP + L-glutamate + AMP + diphosphate + 2 H(+). It participates in purine metabolism; GMP biosynthesis; GMP from XMP (L-Gln route): step 1/1. Its function is as follows. Catalyzes the synthesis of GMP from XMP. This chain is GMP synthase [glutamine-hydrolyzing], found in Gluconobacter oxydans (strain 621H) (Gluconobacter suboxydans).